The chain runs to 102 residues: Integration host factor subunit alpha (102 aa).

Belongs to the bacterial histone-like protein family. As to quaternary structure, heterodimer of an alpha and a beta chain.

This protein is one of the two subunits of integration host factor, a specific DNA-binding protein that functions in genetic recombination as well as in transcriptional and translational control. This is Integration host factor subunit alpha from Buchnera aphidicola subsp. Acyrthosiphon pisum (strain 5A).